Consider the following 801-residue polypeptide: Protein ACCUMULATION AND REPLICATION OF CHLOROPLASTS 6, chloroplastic (801 aa).

The N-terminal 67 residues, 1-67, are a transit peptide targeting the chloroplast; it reads MEALSHVGIG…SSSFATATTT (67 aa). Over 68–618 the chain is Stromal; it reads ATLVSPPPSI…ADMLKEASVK (551 aa). Residues 89 to 153 enclose the J domain; the sequence is DFYQVLGAQT…RSRREYNEGL (65 aa). A helical transmembrane segment spans residues 619–638; that stretch reads ILAAGVAIGLISLFSQKYFL. The Chloroplast intermembrane segment spans residues 639-801; that stretch reads KSSSSFQRKD…KITEGSVLAS (163 aa). Positions 639–801 are interaction with PDV2; it reads KSSSSFQRKD…KITEGSVLAS (163 aa).

Self-interacts. Part of a complex made of ARC3, ARC6, FTSZ1 and FTSZ2. Interacts with FTSZ2-1 and FTSZ2-2 (via C-terminus), but not with FTSZ1; this interaction enables ARC3 binding to FTSZ2. Binds to CDT1A. Interacts (via C-terminus) with PDV2 (via C-terminus) in the chloroplast intermembrane space; this interaction induces homodimerization and leads to the formation of a heterotetramer containing two ARC6 and two PDV2 subunits. Interacts with MCD1 in the chloroplast stroma and facilitates its subsequent binding to FtsZ2-1. Interacts (via J domain) with CJD1 (via J-like domain). As to expression, mostly expressed in young leaves.

It is found in the plastid. The protein resides in the chloroplast inner membrane. Component of the plastid division machinery consisting in a binary fission accomplished by the simultaneous constriction of the FtsZ ring on the stromal side of the inner envelope membrane, and the ARC5 ring on the cytosolic side of the outer envelope membrane. Involved in the initiation of proplastid and plastid division (including chloroplasts, statoliths and leukoplasts). Promotes the assembly and/or stabilization of the plastid-dividing FtsZ ring, functioning as an antagonistic regulator of FtsZ dynamics against CDP1 and facilitating MCD1 positioning to membrane tethered FtsZ filaments to form the chloroplast Z-Ring; inhibits GDP-induced disassembly of FTSZ2 but enables ARC3 binding to FTSZ2-1. Relays plastid division site position between stroma and outer surface via interactions with the stromal FtsZ ring and the outer membrane PDV2 that recruits cytoplasmic ARC5 ring. Required for plastid equatorial positioning of PDV2 and ARC5. May contribute to gravitropism in stems and hypocotyls. Seems to influence stromule (stroma-filled tubular extensions of the plastid envelope membrane) length and frequency. The chain is Protein ACCUMULATION AND REPLICATION OF CHLOROPLASTS 6, chloroplastic from Arabidopsis thaliana (Mouse-ear cress).